Reading from the N-terminus, the 461-residue chain is Probable protein phosphatase 2C 40 (461 aa).

The tract at residues 34–63 (REASAERASASASAGAGGRERERRPSVAAG) is disordered. Residues 57–321 (RPSVAAGQAC…DDTTCIVIDI (265 aa)) form the PPM-type phosphatase domain. Aspartate 98, glycine 99, aspartate 273, and aspartate 312 together coordinate Mn(2+). Residues 439–453 (KKEAMEGKRHSRDSS) are compositionally biased toward basic and acidic residues. The segment at 439–461 (KKEAMEGKRHSRDSSSRNSGSSE) is disordered.

Belongs to the PP2C family. Requires Mg(2+) as cofactor. Mn(2+) is required as a cofactor. As to expression, expressed in leaves, leaf sheaths, panicles, nodes and internodes. Expressed at low levels in roots and stems.

The protein resides in the nucleus. Its subcellular location is the cytoplasm. It carries out the reaction O-phospho-L-seryl-[protein] + H2O = L-seryl-[protein] + phosphate. It catalyses the reaction O-phospho-L-threonyl-[protein] + H2O = L-threonyl-[protein] + phosphate. Functionally, mediates the negative regulation of osmotic and salt stress tolerance through regulation of the jasmonate and abscisic acid signaling pathways and modulation of the raffinose family oligosaccharide metabolism pathway. The protein is Probable protein phosphatase 2C 40 of Oryza sativa subsp. japonica (Rice).